Reading from the N-terminus, the 466-residue chain is Cytochrome c-552 (466 aa).

Positions 1–27 (MVRNLTKKSFALSALVAASLMASGVMA) are cleaved as a signal peptide. His-87 serves as a coordination point for heme c. Residues Cys-115, Cys-118, and Lys-119 each coordinate heme. Heme c-binding residues include Cys-153, Cys-156, His-157, Cys-195, Cys-198, and His-199. Ca(2+) is bound by residues Glu-201, Tyr-202, Lys-250, and Gln-252. Residue Tyr-202 coordinates substrate. Position 253 (His-253) interacts with substrate. Heme c contacts are provided by His-264, Cys-271, Cys-274, His-275, His-290, Cys-303, Cys-306, His-307, and His-382.

This sequence belongs to the cytochrome c-552 family. Ca(2+) is required as a cofactor. Requires heme c as cofactor.

It localises to the periplasm. The enzyme catalyses 6 Fe(III)-[cytochrome c] + NH4(+) + 2 H2O = 6 Fe(II)-[cytochrome c] + nitrite + 8 H(+). It functions in the pathway nitrogen metabolism; nitrate reduction (assimilation). Functionally, catalyzes the reduction of nitrite to ammonia, consuming six electrons in the process. This is Cytochrome c-552 from Shewanella sediminis (strain HAW-EB3).